A 466-amino-acid polypeptide reads, in one-letter code: Signal recognition particle 54 kDa protein (466 aa).

GTP-binding positions include 104–111, 184–188, and 242–245; these read GLQGSGKT, DTAGR, and TKLD. Residues 444–466 are disordered; it reads MQQGGGGGGGGGGGLGGMGPFGD. Residues 446–466 are compositionally biased toward gly residues; the sequence is QGGGGGGGGGGGLGGMGPFGD.

This sequence belongs to the GTP-binding SRP family. SRP54 subfamily. As to quaternary structure, part of the signal recognition particle protein translocation system, which is composed of SRP and FtsY. Archaeal SRP consists of a 7S RNA molecule of 300 nucleotides and two protein subunits: SRP54 and SRP19.

The protein resides in the cytoplasm. The catalysed reaction is GTP + H2O = GDP + phosphate + H(+). Involved in targeting and insertion of nascent membrane proteins into the cytoplasmic membrane. Binds to the hydrophobic signal sequence of the ribosome-nascent chain (RNC) as it emerges from the ribosomes. The SRP-RNC complex is then targeted to the cytoplasmic membrane where it interacts with the SRP receptor FtsY. In Natronomonas pharaonis (strain ATCC 35678 / DSM 2160 / CIP 103997 / JCM 8858 / NBRC 14720 / NCIMB 2260 / Gabara) (Halobacterium pharaonis), this protein is Signal recognition particle 54 kDa protein.